Here is a 293-residue protein sequence, read N- to C-terminus: MSNDEINQNEEKVKRTPPLPPVPEGMSKKQWKKMCKRQRWEENKAKYNAERRVKKKRLRHERSAKIQEYIDRGEEVPQELIREPRINVNQTDSGIEIILDCSFDELMNDKEIVSLSNQVTRAYSANRRANHFAEIKVAPFDKRLKQRFETTLKNTNYENWNHFKFLPDDKIMFGDEHISKDKIVYLTADTEEKLEKLEPGMRYIVGGIVDKNRYKELCLKKAQKMGIPTRRLPIDEYINLEGRRVLTTTHVVQLMLKYFDDHNWKNAFESVLPPRKLDAEAKSASSSPAPKDT.

The interval 1–31 (MSNDEINQNEEKVKRTPPLPPVPEGMSKKQW) is disordered. A Phosphothreonine modification is found at Thr-16. Positions 32–61 (KKMCKRQRWEENKAKYNAERRVKKKRLRHE) form a coiled coil. The SAM-dependent MTase TRM10-type domain maps to 83–279 (EPRINVNQTD…SVLPPRKLDA (197 aa)). S-adenosyl-L-methionine contacts are provided by residues 186–187 (LT), Gly-206, 210–214 (DKNRY), Cys-218, Leu-232, and 244–246 (RVL). The active-site Proton acceptor is the Asp-210. Ser-283 carries the phosphoserine modification.

Belongs to the class IV-like SAM-binding methyltransferase superfamily. TRM10 family. As to quaternary structure, monomer.

The protein resides in the cytoplasm. It is found in the nucleus. The enzyme catalyses guanosine(9) in tRNA + S-adenosyl-L-methionine = N(1)-methylguanosine(9) in tRNA + S-adenosyl-L-homocysteine + H(+). In terms of biological role, S-adenosyl-L-methionine-dependent guanine N(1)-methyltransferase that catalyzes the formation of N(1)-methylguanine at position 9 (m1G9) in cytoplasmic tRNAs. The sequence is that of tRNA (guanine(9)-N1)-methyltransferase from Saccharomyces cerevisiae (strain ATCC 204508 / S288c) (Baker's yeast).